A 593-amino-acid polypeptide reads, in one-letter code: Developmental and secondary metabolism regulator VEL1 (593 aa).

Residues 1–16 (MSNIVVSNETKSQSVR) show a composition bias toward polar residues. The disordered stretch occupies residues 1-21 (MSNIVVSNETKSQSVRTTKDG). Residues 21 to 212 (GRQIRYNLQV…AEQGCRVRIR (192 aa)) enclose the Velvet domain. A Nuclear localization signal motif is present at residues 35-40 (ERARAC). Positions 218–569 (RRRENKSSKE…PGSPDMEEPM (352 aa)) are disordered. Residues 310 to 326 (PSYGSNQPQYSQQYQTP) are compositionally biased toward low complexity. Pro residues predominate over residues 327-340 (QPAPMMQPPQPPQH). Low complexity-rich tracts occupy residues 341–360 (STPYSQHSQHSSYSSQHQAQ) and 367–389 (QQYGYSNYQQQPQQPQSQSQPQY). 2 stretches are compositionally biased toward polar residues: residues 413 to 429 (SSITQSPAQQYTASSHP) and 440 to 449 (GRSQQMSQPL). The PEST stretch occupies residues 443–487 (QQMSQPLHSSPQSYASSAPSHQSLPSLRPIVADKLEPVSPSYQSP). A compositionally biased stretch (low complexity) spans 450–465 (HSSPQSYASSAPSHQS). Composition is skewed to polar residues over residues 482–505 (PSYQSPPTSMSAAISVNSDGSNQH) and 512–534 (NPQTQGLPPMSATSNKRSFSSTF).

It belongs to the velvet family. VeA subfamily. In terms of assembly, component of the heterotrimeric velvet complex composed of LAE1, VEL1 and VEL2; VEL1 acting as a bridging protein between LAE1 and VEL2.

It localises to the nucleus. The protein localises to the cytoplasm. In terms of biological role, component of the velvet transcription factor complex that controls sexual/asexual developmental ratio in response to light, promoting sexual development in the darkness while stimulating asexual sporulation under illumination. The velvet complex acts as a global regulator for secondary metabolite gene expression. Controls the expression of the T-toxin gene cluster. Promotes oxidative stress tolerance and acts as a virulence factors during infection. Negatively regulate mycelial pigmentation and controls sexual development, as well as asexual development during vegetative growth. The protein is Developmental and secondary metabolism regulator VEL1 of Cochliobolus heterostrophus (strain C5 / ATCC 48332 / race O) (Southern corn leaf blight fungus).